We begin with the raw amino-acid sequence, 555 residues long: Glutamine--tRNA ligase (555 aa).

The 'HIGH' region signature appears at 34–44; it reads PEPNGFLHIGH. Residues 35 to 37 and 41 to 47 each bind ATP; these read EPN and HIGHAKS. Residues D67 and Y212 each coordinate L-glutamine. Residues T231, 261–262, and 269–271 contribute to the ATP site; these read RL and LSK. Positions 268-272 match the 'KMSKS' region motif; the sequence is VLSKR.

This sequence belongs to the class-I aminoacyl-tRNA synthetase family. As to quaternary structure, monomer.

The protein localises to the cytoplasm. It catalyses the reaction tRNA(Gln) + L-glutamine + ATP = L-glutaminyl-tRNA(Gln) + AMP + diphosphate. The protein is Glutamine--tRNA ligase of Alteromonas mediterranea (strain DSM 17117 / CIP 110805 / LMG 28347 / Deep ecotype).